The chain runs to 488 residues: Rhamnulokinase (488 aa).

13 to 17 (ASSGR) provides a ligand contact to ATP. Residues C68 and C222 are joined by a disulfide bond. Substrate contacts are provided by residues G83 and 236–238 (HDT). D237 (proton acceptor) is an active-site residue. T259 contacts ATP. N296 is a binding site for substrate. Q304 is a binding site for ATP. A disulfide bridge links C353 with C370. G402 lines the ATP pocket. C413 and C417 are oxidised to a cystine.

The protein belongs to the rhamnulokinase family. Mg(2+) serves as cofactor.

The enzyme catalyses L-rhamnulose + ATP = L-rhamnulose 1-phosphate + ADP + H(+). It functions in the pathway carbohydrate degradation; L-rhamnose degradation; glycerone phosphate from L-rhamnose: step 2/3. In terms of biological role, involved in the catabolism of L-rhamnose (6-deoxy-L-mannose). Catalyzes the transfer of the gamma-phosphate group from ATP to the 1-hydroxyl group of L-rhamnulose to yield L-rhamnulose 1-phosphate. The chain is Rhamnulokinase from Klebsiella pneumoniae subsp. pneumoniae (strain ATCC 700721 / MGH 78578).